The sequence spans 667 residues: High affinity sulfate transporter 1 (667 aa).

The interval 16-38 (ETRSNSSSHRHGGGGGGDDTTSL) is disordered. The next 11 helical transmembrane spans lie at 106-126 (GDFI…LAYA), 131-151 (LDPW…AFMG), 156-176 (IAIG…SNEI), 185-205 (LRLA…LGVC), 208-228 (GFLI…GAAI), 269-289 (WETI…KYIA), 296-316 (FWVS…FVYI), 350-370 (GAGV…AIAI), 425-445 (VSNI…TPLF), 452-472 (VLAS…AMVL), and 486-506 (GAFF…AVAI). Residues 537–660 (QYPKAAQIPG…LTVADAVATY (124 aa)) form the STAS domain.

This sequence belongs to the SLC26A/SulP transporter (TC 2.A.53) family.

Its subcellular location is the membrane. In terms of biological role, high-affinity H(+)/sulfate cotransporter that mediates the uptake of sulfate by plant roots from low concentrations of sulfate in the soil solution. In Stylosanthes hamata (Caribbean stylo), this protein is High affinity sulfate transporter 1 (ST1).